The chain runs to 320 residues: Mas-related G-protein coupled receptor member D (320 aa).

Topologically, residues 1–33 (MNQTLNSSGTAELALNHSRGSVVHAACLVLSSL) are extracellular. N2, N6, and N16 each carry an N-linked (GlcNAc...) asparagine glycan. The helical transmembrane segment at 34 to 54 (AMFTCLCGMAGNSMVIWLLGF) threads the bilayer. Over 55 to 62 (RMRRTPFS) the chain is Cytoplasmic. Residues 63–83 (IYILNLAAADLLFVFCMAAML) form a helical membrane-spanning segment. Residues 84 to 112 (SLETQPLVSTTDKVHELMKRLKYFAYTVG) are Extracellular-facing. A helical membrane pass occupies residues 113-133 (LSLLTAISTQRCLSVLFPIWF). The Cytoplasmic segment spans residues 134–142 (KCHRPRHLS). Residues 143–163 (AWVCALLWMLCLLTNGLTSCF) form a helical membrane-spanning segment. The Extracellular segment spans residues 164 to 182 (CSKFLKFNKDQCFRVDMVQ). A helical membrane pass occupies residues 183 to 203 (AALIMGVLTPVMTLSSLTLFV). The Cytoplasmic segment spans residues 204–218 (RVRRSSQQWRRQPTR). Residues 219-239 (LFVVVLASVLVFLICSLPLGF) form a helical membrane-spanning segment. Residues 240–257 (YWFVLYWLNLPPDTKVLY) are Extracellular-facing. A helical transmembrane segment spans residues 258-280 (FNLSRLSSSMSSSANPLIYFLVG). The Cytoplasmic segment spans residues 281–320 (SRRSRRLQGSLGTVLQRALREEPELEGGETPTTGTNEMGA). A disordered region spans residues 301 to 320 (EEPELEGGETPTTGTNEMGA). A compositionally biased stretch (low complexity) spans 308 to 320 (GETPTTGTNEMGA).

The protein belongs to the G-protein coupled receptor 1 family. Mas subfamily. As to expression, co-expressed in the small diameter neurons with P2X3 and VR1 in dorsal root ganglia.

It localises to the cell membrane. Functionally, may regulate nociceptor function and/or development, including the sensation or modulation of pain. Functions as a specific membrane receptor for beta-alanine. The receptor couples with G-protein G(q) and G(i). This Macaca fascicularis (Crab-eating macaque) protein is Mas-related G-protein coupled receptor member D (MRGPRD).